The primary structure comprises 519 residues: uncharacterized protein (519 aa).

The span at 477 to 486 (IKRERAHVTQ) shows a compositional bias: basic residues. A disordered region spans residues 477 to 519 (IKRERAHVTQRNKPPPSGGDTAVAEGFEPPDGVSRLSLSRRVH).

This is an uncharacterized protein from Mycobacterium tuberculosis (strain ATCC 25618 / H37Rv).